Here is a 1065-residue protein sequence, read N- to C-terminus: Pumilio domain-containing protein P35G2.14 (1065 aa).

3 disordered regions span residues 1 to 78 (MHQD…SLRS), 130 to 265 (ITSK…PWSP), and 422 to 573 (TTGF…NTNS). Positions 16-44 (RNTISKPSNNNPPLDMSSLNNDFGQQLDS) are enriched in polar residues. Over residues 59 to 77 (NPSSNFNDSNRSNISSSLR) the composition is skewed to low complexity. 2 stretches are compositionally biased toward polar residues: residues 134–151 (LQNN…RGRT) and 169–189 (SSVS…HFNP). Composition is skewed to low complexity over residues 190–224 (SSSS…SEII) and 236–246 (SASNAANSGSN). Polar residues-rich tracts occupy residues 247-262 (TIRA…NTLP) and 434-455 (GLNT…TFEV). Thr-260 bears the Phosphothreonine mark. Low complexity predominate over residues 470–483 (PLGSLSSRPKPSSS). 2 stretches are compositionally biased toward polar residues: residues 495–522 (LKTS…SSSP) and 529–551 (IHNQ…NGLR). Residues Ser-506, Ser-511, and Ser-515 each carry the phosphoserine modification. Thr-554 carries the phosphothreonine modification. Residues 559–573 (NISTRSSSESNNTNS) show a composition bias toward low complexity. The region spanning 592–666 (HALWVGNLPS…DPVCISFAKV (75 aa)) is the RRM domain. One can recognise a PUM-HD domain in the interval 712–1065 (DLSKIYQILN…ELKKLAEVCA (354 aa)). Pumilio repeat units lie at residues 771 to 808 (AINW…MMLE), 809 to 844 (RIAP…RLIA), 846 to 884 (HLQP…AILN), 886 to 917 (FWVI…VLVA), 919 to 954 (AITV…ILLT), and 956 to 993 (RFVQ…LVVD).

It localises to the cytoplasm. This is Pumilio domain-containing protein P35G2.14 from Schizosaccharomyces pombe (strain 972 / ATCC 24843) (Fission yeast).